The chain runs to 367 residues: Probable L-aspartate decarboxylase (367 aa).

Position 216 is an N6-(pyridoxal phosphate)lysine (Lys-216).

Belongs to the group II decarboxylase family. MfnA subfamily. It depends on pyridoxal 5'-phosphate as a cofactor.

It carries out the reaction L-aspartate + H(+) = beta-alanine + CO2. Its pathway is cofactor biosynthesis; coenzyme A biosynthesis. In terms of biological role, catalyzes the decarboxylation of L-aspartate to produce beta-alanine. This is Probable L-aspartate decarboxylase from Archaeoglobus fulgidus (strain ATCC 49558 / DSM 4304 / JCM 9628 / NBRC 100126 / VC-16).